The primary structure comprises 261 residues: Carnitinyl-CoA dehydratase (261 aa).

The active-site Nucleophile is glutamate 111. Catalysis depends on glutamate 131, which acts as the Proton acceptor.

This sequence belongs to the enoyl-CoA hydratase/isomerase family.

The enzyme catalyses (R)-carnitinyl-CoA = crotonobetainyl-CoA + H2O. It functions in the pathway amine and polyamine metabolism; carnitine metabolism. Functionally, catalyzes the reversible dehydration of L-carnitinyl-CoA to crotonobetainyl-CoA. In Citrobacter koseri (strain ATCC BAA-895 / CDC 4225-83 / SGSC4696), this protein is Carnitinyl-CoA dehydratase.